We begin with the raw amino-acid sequence, 483 residues long: Glutamyl-tRNA(Gln) amidotransferase subunit A (483 aa).

Active-site charge relay system residues include Lys77 and Ser152. Catalysis depends on Ser176, which acts as the Acyl-ester intermediate.

Belongs to the amidase family. GatA subfamily. Heterotrimer of A, B and C subunits.

The catalysed reaction is L-glutamyl-tRNA(Gln) + L-glutamine + ATP + H2O = L-glutaminyl-tRNA(Gln) + L-glutamate + ADP + phosphate + H(+). In terms of biological role, allows the formation of correctly charged Gln-tRNA(Gln) through the transamidation of misacylated Glu-tRNA(Gln) in organisms which lack glutaminyl-tRNA synthetase. The reaction takes place in the presence of glutamine and ATP through an activated gamma-phospho-Glu-tRNA(Gln). The sequence is that of Glutamyl-tRNA(Gln) amidotransferase subunit A from Listeria innocua serovar 6a (strain ATCC BAA-680 / CLIP 11262).